The following is a 328-amino-acid chain: L-lactate dehydrogenase (328 aa).

NAD(+)-binding positions include Val18, Glu39, Lys46, Tyr71, and 85–86; that span reads GA. Positions 88 and 94 each coordinate substrate. Residues Ser107, 124–126, and Ser149 contribute to the NAD(+) site; that span reads AAN. Substrate is bound at residue 126–129; it reads NPVD. 154–157 provides a ligand contact to substrate; sequence DSAR. Beta-D-fructose 1,6-bisphosphate is bound by residues Arg159 and His174. Catalysis depends on His181, which acts as the Proton acceptor. Tyr226 is modified (phosphotyrosine). Substrate is bound at residue Thr235.

It belongs to the LDH/MDH superfamily. LDH family. Homotetramer.

It localises to the cytoplasm. It catalyses the reaction (S)-lactate + NAD(+) = pyruvate + NADH + H(+). Its pathway is fermentation; pyruvate fermentation to lactate; (S)-lactate from pyruvate: step 1/1. Allosterically activated by fructose 1,6-bisphosphate (FBP). Functionally, catalyzes the conversion of lactate to pyruvate. The sequence is that of L-lactate dehydrogenase from Streptococcus thermophilus (strain CNRZ 1066).